The primary structure comprises 781 residues: MSVNPRKRKVVTRPAPEPSDSEGELGDGLLEGILSHSEDDSDNSREEEVDTDASSVIEGLSDEDEEEDEDSDSEQIRTEMRNLNTSDGPLRKKKGVPTHDMDLDTAVTEELEDDEDLKPNYTVTTDAHGNTRYIYKEIDPVYESDDSDVEATNTIGNIDLKYYDEYPHIGYDINGKKIMRPAKGEALDALLDSIDIPKGWTGLTDPQTGKPLNLSEEELDVLKRLTRNEVVEDGYDPYPEMVAYFSGKQEIMPLSAAPEPKRRFIPSKHEAKRVMKLVKAIREGRIQPYRAPEEQEEEQDAFNFDVWADEKPRPDNSMHIPAPKLPPPGYEASYHPPPEYLPDKAEEQAWLEADEEDREREFLPKNYDALRKVPGYETFVKERFERSLDLYLAPRIRRNRLNIDPESLLPKLPNPEDLKPFPTTCAAIFRGQEGRVRCVSIDPNGIFVASGGDDGYVRIWELLTGRQVWNAKLSDEEAVDAVQWRPKKDASVVAAACGENVFLIVPFTLLSPDVEQASREVLDAGWGYATSKPSTSSNGEAPKQAPGKWSRPGARLENKGVLVQVEVRSAVKIVNWHRRGDYFATVSPRGQSTAVAIHTVSKHLTQLPFRRLKGIAQTAQFHPSKAIFFVATRNTIRSYDLAKQELVKILQPGAKWISSIDVHPGGDNLIVGTYDKRLLWHDLDLSNKPYKTLRFHKEAIRAVRFHQGGLPLFADTSDDGTIQIFHGKVVGDLMENATIVPLKVLKGHKVRSRLGVMGLDWHPKEPWCVSAGADGTLRLWS.

The segment covering 1-11 (MSVNPRKRKVV) has biased composition (basic residues). The tract at residues 1–103 (MSVNPRKRKV…KGVPTHDMDL (103 aa)) is disordered. Residues 36 to 46 (HSEDDSDNSRE) show a composition bias toward basic and acidic residues. Acidic residues predominate over residues 60 to 73 (LSDEDEEEDEDSDS). WD repeat units follow at residues 431–470 (GQEG…QVWN) and 474–515 (SDEE…PDVE). A disordered region spans residues 529–553 (ATSKPSTSSNGEAPKQAPGKWSRPG). WD repeat units follow at residues 611-651 (RLKG…KILQ), 652-691 (PGAK…KPYK), 695-735 (FHKE…DLME), and 751-781 (RSRL…RLWS).

It belongs to the WD repeat BOP1/ERB1 family. As to quaternary structure, component of the NOP7 complex, composed of erb1, nop7 and ytm1. The complex is held together by erb1, which interacts with nop7 via its N-terminal domain and with ytm1 via a high-affinity interaction between the seven-bladed beta-propeller domains of the 2 proteins. The NOP7 complex associates with the 66S pre-ribosome.

It is found in the nucleus. It localises to the nucleolus. Its subcellular location is the nucleoplasm. Functionally, component of the NOP7 complex, which is required for maturation of the 25S and 5.8S ribosomal RNAs and formation of the 60S ribosome. The sequence is that of Ribosome biogenesis protein erb1 (erb1) from Pyrenophora tritici-repentis (strain Pt-1C-BFP) (Wheat tan spot fungus).